The primary structure comprises 80 residues: Pigment-dispersing hormone type 2 (80 aa).

The N-terminal stretch at methionine 1 to alanine 23 is a signal peptide. At alanine 77 the chain carries Alanine amide.

The protein belongs to the arthropod PDH family. As to expression, eyestalk.

It localises to the secreted. Functionally, the pigment-dispersing hormone causes the migration of the distal retinal pigment into the proximal end of the pigment chromatophore cells and thus decreases the amount of light entering the retinulas. May also function as a neurotransmitter and/or neuromodulator. In Penaeus vannamei (Whiteleg shrimp), this protein is Pigment-dispersing hormone type 2 (PDH2).